Consider the following 209-residue polypeptide: Large ribosomal subunit protein uL4 (209 aa).

The disordered stretch occupies residues 46–71 (GTSSTKTRSEVRGSSKKPWKQKGTGR). Residues 59–71 (SSKKPWKQKGTGR) are compositionally biased toward basic residues.

This sequence belongs to the universal ribosomal protein uL4 family. In terms of assembly, part of the 50S ribosomal subunit.

Its function is as follows. One of the primary rRNA binding proteins, this protein initially binds near the 5'-end of the 23S rRNA. It is important during the early stages of 50S assembly. It makes multiple contacts with different domains of the 23S rRNA in the assembled 50S subunit and ribosome. Functionally, forms part of the polypeptide exit tunnel. The protein is Large ribosomal subunit protein uL4 of Borrelia garinii subsp. bavariensis (strain ATCC BAA-2496 / DSM 23469 / PBi) (Borreliella bavariensis).